The following is a 3011-amino-acid chain: Chromodomain-helicase-DNA-binding protein 7 (3011 aa).

Disordered stretches follow at residues 90-146 (ISNA…SMWG), 159-189 (PYQQQQQQPQPTQPPQAPSGPPGQGHPQHMQ), 202-422 (MQQH…GSAG), 502-806 (QQLP…VEKI), and 941-960 (PEMERVERPPADDWKKSESS). Over residues 159–168 (PYQQQQQQPQ) the composition is skewed to low complexity. The span at 169–179 (PTQPPQAPSGP) shows a compositional bias: pro residues. Low complexity predominate over residues 203–215 (QQHGQPQQQRMNQ). Composition is skewed to polar residues over residues 216-227 (FSQGQEGLNQGN), 241-258 (VPQQNPSMAPSLRHSVQQ), 291-347 (QTLN…NQSV), and 374-393 (GSLNQMNTQTMHPSQPQGTY). The segment covering 502 to 516 (QQLPSQQQSFQQQMP) has biased composition (low complexity). 2 stretches are compositionally biased toward polar residues: residues 576-586 (TQVSGPNTQLV) and 630-641 (DSQNLSRNSVDC). 2 stretches are compositionally biased toward basic and acidic residues: residues 655–684 (KKEPKDPKEPKEKKEPKTPKVPKTPKEPKE) and 718–730 (KGKEGSENSDLDK). The span at 747–759 (QKRRSSRQVKRKR) shows a compositional bias: basic residues. Residues 760–770 (YTEDLEFKISD) show a composition bias toward basic and acidic residues. Residues 783-795 (SPSNTSQSEQQES) are compositionally biased toward polar residues. 2 consecutive Chromo domains span residues 801–868 (PVVE…GQNK) and 883–948 (VEID…RVER). Residues 981–1155 (LFNWYNTRNC…FSLLHFLEPG (175 aa)) enclose the Helicase ATP-binding domain. 994–1001 (DEMGLGKT) serves as a coordination point for ATP. Residues 1106-1109 (DEAH) carry the DEAH box motif. The Helicase C-terminal domain occupies 1295–1465 (LIDKLLPKLK…LSKKEIEDLL (171 aa)). Disordered regions lie at residues 1577 to 1602 (FSDLESDSEEKPSTKPRRPQDKSQGY), 1836 to 1869 (GTDMLADGGDGGEFDREDEDPEYKPTRTPFKDEI), and 2136 to 2291 (GTGN…GFYM). Positions 1585–1597 (EEKPSTKPRRPQD) are enriched in basic and acidic residues. Acidic residues predominate over residues 1845 to 1856 (DGGEFDREDEDP). Basic and acidic residues predominate over residues 1857 to 1867 (EYKPTRTPFKD). A compositionally biased stretch (polar residues) spans 2136–2145 (GTGNANTVSS). 2 stretches are compositionally biased toward basic and acidic residues: residues 2166–2207 (QEEK…KQDC) and 2218–2238 (CELKDIEMSTDVDPKSISEKG). A compositionally biased stretch (acidic residues) spans 2239-2253 (SEEDEEEKLDDDDKS). A coiled-coil region spans residues 2403–2433 (RRRRRKIEIEAERAAKRRNLMEMVAQLRESQ). Phosphoserine is present on S2561. Disordered regions lie at residues 2825–2900 (TTGN…LPTN) and 2946–3011 (GSNE…ENDE). Residues 2841 to 2851 (GASKAEEKKNE) are compositionally biased toward basic and acidic residues. A compositionally biased stretch (polar residues) spans 2864 to 2877 (DTVSATDSANGSVS). The segment covering 2878-2893 (AATAATTATATTTTTT) has biased composition (low complexity). Basic and acidic residues predominate over residues 2948-2964 (NEEKATDKTEGTAFKDE). 2 stretches are compositionally biased toward acidic residues: residues 2965 to 2974 (ENLEGSDAEE) and 2984 to 3011 (ILEDEIAQGEELDSLDGGEEIENNENDE).

It belongs to the SNF2/RAD54 helicase family. Expressed in the neural epithelium, otic placodes, optic placodes, branchial arches, and the olfactory placodes,.

It localises to the nucleus. The enzyme catalyses ATP + H2O = ADP + phosphate + H(+). In terms of biological role, ATP-dependent chromatin-remodeling factor, slides nucleosomes along DNA; nucleosome sliding requires ATP.Probable transcription regulator. Maybe involved in the in 45S precursor rRNA production. This is Chromodomain-helicase-DNA-binding protein 7 (CHD7) from Gallus gallus (Chicken).